Consider the following 104-residue polypeptide: Small ribosomal subunit protein uS10 (104 aa).

This sequence belongs to the universal ribosomal protein uS10 family. Part of the 30S ribosomal subunit.

In terms of biological role, involved in the binding of tRNA to the ribosomes. This Thermoplasma acidophilum (strain ATCC 25905 / DSM 1728 / JCM 9062 / NBRC 15155 / AMRC-C165) protein is Small ribosomal subunit protein uS10.